The primary structure comprises 152 residues: Transcriptional regulator MraZ (152 aa).

SpoVT-AbrB domains follow at residues 5–52 (ATLV…TLPE) and 81–124 (ASEC…DETT).

It belongs to the MraZ family. As to quaternary structure, forms oligomers.

The protein resides in the cytoplasm. Its subcellular location is the nucleoid. Functionally, negatively regulates its own expression and that of the subsequent genes in the proximal part of the division and cell wall (dcw) gene cluster. Acts by binding directly to DNA. May also regulate the expression of genes outside the dcw cluster. This is Transcriptional regulator MraZ from Enterobacter sp. (strain 638).